The chain runs to 476 residues: Aspartyl/glutamyl-tRNA(Asn/Gln) amidotransferase subunit B (476 aa).

This sequence belongs to the GatB/GatE family. GatB subfamily. As to quaternary structure, heterotrimer of A, B and C subunits.

The catalysed reaction is L-glutamyl-tRNA(Gln) + L-glutamine + ATP + H2O = L-glutaminyl-tRNA(Gln) + L-glutamate + ADP + phosphate + H(+). It carries out the reaction L-aspartyl-tRNA(Asn) + L-glutamine + ATP + H2O = L-asparaginyl-tRNA(Asn) + L-glutamate + ADP + phosphate + 2 H(+). Functionally, allows the formation of correctly charged Asn-tRNA(Asn) or Gln-tRNA(Gln) through the transamidation of misacylated Asp-tRNA(Asn) or Glu-tRNA(Gln) in organisms which lack either or both of asparaginyl-tRNA or glutaminyl-tRNA synthetases. The reaction takes place in the presence of glutamine and ATP through an activated phospho-Asp-tRNA(Asn) or phospho-Glu-tRNA(Gln). The protein is Aspartyl/glutamyl-tRNA(Asn/Gln) amidotransferase subunit B of Vesicomyosocius okutanii subsp. Calyptogena okutanii (strain HA).